A 535-amino-acid polypeptide reads, in one-letter code: Importin subunit alpha-2 (535 aa).

The 58-residue stretch at 1–58 folds into the IBB domain; that stretch reads MSLRPNAKTEVRRNRYKVAVDAEEGRRRREDNMVEIRKSKREESLQKKRREGLQANQL. Over residues 20 to 46 the composition is skewed to basic and acidic residues; sequence VDAEEGRRRREDNMVEIRKSKREESLQ. Residues 20–67 form a disordered region; sequence VDAEEGRRRREDNMVEIRKSKREESLQKKRREGLQANQLPQFAPSPVP. ARM repeat units lie at residues 67–106, 110–150, 153–192, 195–235, 237–276, 279–318, 321–361, 364–403, 407–446, and 461–500; these read PASS…KLLS, SPPI…NIAS, SENT…NVAG, PRCR…NFCR, KPQP…YLSD, NDKI…NIVT, DLQT…NITA, RDQI…NATS, PDQI…NILK, and NFYA…TYWL.

This sequence belongs to the importin alpha family. As to quaternary structure, forms a complex with the importin subunit beta-1 KPNB1. Interacts with A.tumefaciens VirD2 and VirE2. Binds to SWO1.

It is found in the nucleus envelope. Functionally, binds to conventional NLS motifs and mediates nuclear protein import across the nuclear envelope. Involved in the maintenance of cell wall integrity under salt stress via interaction with SWO1. Acts as a cellular receptor for the nuclear import of the virD2 protein of Agrobacterium, but is not essential for Agrobacterium-mediated root transformation. The chain is Importin subunit alpha-2 from Arabidopsis thaliana (Mouse-ear cress).